A 158-amino-acid polypeptide reads, in one-letter code: Transcription elongation factor GreA (158 aa).

Positions 49–73 (QAAREQQGFIEGRIKEIEAKLANAQ) form a coiled coil.

It belongs to the GreA/GreB family.

Necessary for efficient RNA polymerase transcription elongation past template-encoded arresting sites. The arresting sites in DNA have the property of trapping a certain fraction of elongating RNA polymerases that pass through, resulting in locked ternary complexes. Cleavage of the nascent transcript by cleavage factors such as GreA or GreB allows the resumption of elongation from the new 3'terminus. GreA releases sequences of 2 to 3 nucleotides. The protein is Transcription elongation factor GreA of Methylococcus capsulatus (strain ATCC 33009 / NCIMB 11132 / Bath).